The primary structure comprises 371 residues: Glycosyltransferase 8 domain-containing protein 1 (371 aa).

At 1 to 7 the chain is on the cytoplasmic side; sequence MSFRKVN. The helical; Signal-anchor for type II membrane protein transmembrane segment at 8 to 28 threads the bilayer; the sequence is IIILVLAVALFLLVLHHNFLS. Over 29-371 the chain is Lumenal; sequence LSSLLRNEVT…RRYTEISNIK (343 aa). N-linked (GlcNAc...) asparagine glycosylation is found at Asn249 and Asn257.

This sequence belongs to the glycosyltransferase 8 family.

Its subcellular location is the membrane. This is Glycosyltransferase 8 domain-containing protein 1 (GLT8D1) from Homo sapiens (Human).